The primary structure comprises 227 residues: ATP-dependent dethiobiotin synthetase BioD (227 aa).

13-18 (NIGKTV) contributes to the ATP binding site. T17 lines the Mg(2+) pocket. The active site involves K38. Residues D55 and 116 to 119 (EGIG) contribute to the ATP site. 2 residues coordinate Mg(2+): D55 and E116.

This sequence belongs to the dethiobiotin synthetase family. As to quaternary structure, homodimer. Mg(2+) serves as cofactor.

It localises to the cytoplasm. The catalysed reaction is (7R,8S)-7,8-diammoniononanoate + CO2 + ATP = (4R,5S)-dethiobiotin + ADP + phosphate + 3 H(+). The protein operates within cofactor biosynthesis; biotin biosynthesis; biotin from 7,8-diaminononanoate: step 1/2. In terms of biological role, catalyzes a mechanistically unusual reaction, the ATP-dependent insertion of CO2 between the N7 and N8 nitrogen atoms of 7,8-diaminopelargonic acid (DAPA, also called 7,8-diammoniononanoate) to form a ureido ring. The sequence is that of ATP-dependent dethiobiotin synthetase BioD from Buchnera aphidicola subsp. Baizongia pistaciae (strain Bp).